The following is a 320-amino-acid chain: Cytochrome f (320 aa).

Residues 1–35 form the signal peptide; it reads MENKNTFSWVKEQMTRSISVSIMIYVITQTSISNA. 4 residues coordinate heme: Tyr36, Cys56, Cys59, and His60. A helical transmembrane segment spans residues 286–306; it reads VQGLLFFFASVILAQVFLVLK.

The protein belongs to the cytochrome f family. In terms of assembly, the 4 large subunits of the cytochrome b6-f complex are cytochrome b6, subunit IV (17 kDa polypeptide, petD), cytochrome f and the Rieske protein, while the 4 small subunits are PetG, PetL, PetM and PetN. The complex functions as a dimer. It depends on heme as a cofactor.

It localises to the plastid. Its subcellular location is the chloroplast thylakoid membrane. In terms of biological role, component of the cytochrome b6-f complex, which mediates electron transfer between photosystem II (PSII) and photosystem I (PSI), cyclic electron flow around PSI, and state transitions. The protein is Cytochrome f of Lolium perenne (Perennial ryegrass).